The following is a 122-amino-acid chain: Mth938 domain-containing protein (122 aa).

The MTH138-like domain stretch occupies residues 6–122 (IASLSWGQMK…RVGGVFHSTC (117 aa)).

Belongs to the AAMDC family.

Its subcellular location is the cytoplasm. Its function is as follows. May play a role in preadipocyte differentiation and adipogenesis. This is Mth938 domain-containing protein (AAMDC) from Homo sapiens (Human).